Here is a 332-residue protein sequence, read N- to C-terminus: Agamous-like MADS-box protein AGL66 (332 aa).

The MADS-box domain maps to 1–61; it reads MGRVKLEIKR…DRLSLFSGKT (61 aa). The stretch at 120–151 forms a coiled coil; it reads TAINSDVEELEHEVYKLQQQLLMAEEELRKYE.

As to quaternary structure, forms a heterodimer with AGL30. As to expression, expressed in pollen.

It is found in the nucleus. Probable transcription factor that forms a heterodimer with the MADS-box protein AGL30 and is involved in the regulation of pollen maturation at the late stages of pollen development and pollen tube growth. The sequence is that of Agamous-like MADS-box protein AGL66 from Arabidopsis thaliana (Mouse-ear cress).